A 276-amino-acid chain; its full sequence is Pantothenate synthetase (276 aa).

26-33 contributes to the ATP binding site; the sequence is MGFLHAGH. Catalysis depends on His33, which acts as the Proton donor. Residue Gln57 coordinates (R)-pantoate. Gln57 is a beta-alanine binding site. 143-146 is an ATP binding site; it reads GQKD. Gln149 lines the (R)-pantoate pocket. ATP is bound by residues Ile172 and 180–183; that span reads MSSR.

This sequence belongs to the pantothenate synthetase family. In terms of assembly, homodimer.

It localises to the cytoplasm. It carries out the reaction (R)-pantoate + beta-alanine + ATP = (R)-pantothenate + AMP + diphosphate + H(+). Its pathway is cofactor biosynthesis; (R)-pantothenate biosynthesis; (R)-pantothenate from (R)-pantoate and beta-alanine: step 1/1. Functionally, catalyzes the condensation of pantoate with beta-alanine in an ATP-dependent reaction via a pantoyl-adenylate intermediate. The protein is Pantothenate synthetase of Herpetosiphon aurantiacus (strain ATCC 23779 / DSM 785 / 114-95).